We begin with the raw amino-acid sequence, 253 residues long: MDVSDVTSRYNDRLRVTDYADAATNGLQVGPGDRSVERIAFAVDAAAATISDAVEWGADLLVVHHGVAWGGLDAVTGREYDRIAALVDGECALYAAHLPLDGHPELGNAAHVADVLGLTQRSPFGDHSGEQIGLQGQLPDPTSAPALSKSLAAALPTGDQPVQVLDVGPAELTDVAVVTGSGADWLREAEANGVDALVTGEGKGKLYHEAREAGVSVFLAGHYATETGGVRALEAVADDWGVETRFISHPTGL.

Positions 64, 65, 101, 222, and 226 each coordinate a divalent metal cation.

Belongs to the GTP cyclohydrolase I type 2/NIF3 family. In terms of assembly, homohexamer.

The sequence is that of GTP cyclohydrolase 1 type 2 homolog from Halobacterium salinarum (strain ATCC 700922 / JCM 11081 / NRC-1) (Halobacterium halobium).